We begin with the raw amino-acid sequence, 257 residues long: Triosephosphate isomerase (257 aa).

Substrate-binding residues include Asn11 and Lys13. His96 (electrophile) is an active-site residue. The active-site Proton acceptor is Glu170.

The protein belongs to the triosephosphate isomerase family. In terms of assembly, homodimer.

It is found in the cytoplasm. The enzyme catalyses D-glyceraldehyde 3-phosphate = dihydroxyacetone phosphate. The catalysed reaction is dihydroxyacetone phosphate = methylglyoxal + phosphate. Its pathway is carbohydrate biosynthesis; gluconeogenesis. The protein operates within carbohydrate degradation; glycolysis; D-glyceraldehyde 3-phosphate from glycerone phosphate: step 1/1. Triosephosphate isomerase is an extremely efficient metabolic enzyme that catalyzes the interconversion between dihydroxyacetone phosphate (DHAP) and D-glyceraldehyde-3-phosphate (G3P) in glycolysis and gluconeogenesis. Functionally, it is also responsible for the non-negligible production of methylglyoxal a reactive cytotoxic side-product that modifies and can alter proteins, DNA and lipids. This Giardia intestinalis (Giardia lamblia) protein is Triosephosphate isomerase.